The primary structure comprises 728 residues: Probable subtilase-type serine protease DR_A0283 (728 aa).

The signal sequence occupies residues 1-22 (MPGALPMKKISLAVLSLTTLLA). A propeptide spanning residues 23–148 (ACGQPQTSPQ…RTAQDQLGAQ (126 aa)) is cleaved from the precursor. Residues 159 to 471 (QYALDSNHLH…YGLIRMDKLA (313 aa)) form the Peptidase S8 domain. Residues aspartate 188, histidine 242, and serine 412 each act as charge relay system in the active site.

It belongs to the peptidase S8 family.

The protein resides in the secreted. The polypeptide is Probable subtilase-type serine protease DR_A0283 (Deinococcus radiodurans (strain ATCC 13939 / DSM 20539 / JCM 16871 / CCUG 27074 / LMG 4051 / NBRC 15346 / NCIMB 9279 / VKM B-1422 / R1)).